Here is a 798-residue protein sequence, read N- to C-terminus: MSSNNDNSTNNKNNVNINTDNRLYQLDELISDIYKAVYIKDNDYTIKFIDVKDINLPRFKLSDYDLDIIFDKIKYAGSFPTGIVIDGTSTNEIWFKRRGETEMSTIRIVPYQNKEAVDDITDPINVNQIMKTLLSELVVSEKTNNILLPVINVDVLGSDLTTYGKISPYINSSDDTYYSVQVTEKYYSLKTLDQFFKDYVIEARTIKSIIYQAIDVLYQISVQYPKFKYNQLFPETIDCYLKQDNNLIIPEIKLSNFYLSSIDDLVKNSYLDSNDFTVEQIADQYGDLYQLVNYMWNNLQSSIQNFPDVIKIFDIVLPKKIRSKELYLTSELWNLLSEDEKFELKIKNLRNNHIFTSKDSLSNTTFVKSKDQPIDFSGGSEDNELSVEDFEASEDLNDIDESIPVVKNSSKIKYPHKDIGIMANNKTISDRKLTDNLSNKSSNDNTSETTSDKSYRSSNSRNSDNSKSKTTRSKTQSSDSSKSSRIPRSSESKRSTNSVVSVGSTGSDVYSDMERTEYPSRSTYKSRTINRSDSESSPVSSRTSSPVDDSRLKQSRISEDKPRKNKAYRGRRVIGQNNTASLLAALNDDNYNQGQNNVTDINSIGSMLGVSVNELASKNSNPNYSQIMQQIASQMNGQQASPNSLFGQAGNINQQLNPQQLSALLGQSYNPNTQFNQLNQLGQLGQLNSMNSINQMAQLGQMGQLGQTGQVNPMSQMSQMNTMNPMGQPNQSYNSQNDTDLLYRYMATLNQGQSGQQMDPNAIATLMQQNSTGFPSYAQLGGNVNNNNNMNRNPFFFQ.

Positions lysine 432 to valine 573 are disordered. 4 stretches are compositionally biased toward low complexity: residues serine 438–threonine 449, arginine 456–asparagine 465, serine 473–proline 487, and serine 495–tyrosine 510. Residues proline 519–isoleucine 529 are compositionally biased toward polar residues. Low complexity predominate over residues glutamate 535–valine 547. Positions aspartate 548 to proline 562 are enriched in basic and acidic residues. The segment covering arginine 563–arginine 572 has biased composition (basic residues).

Its subcellular location is the virion. This is an uncharacterized protein from Acanthamoeba polyphaga (Amoeba).